Consider the following 114-residue polypeptide: uncharacterized protein (114 aa).

This is an uncharacterized protein from Saccharomyces cerevisiae (strain ATCC 204508 / S288c) (Baker's yeast).